A 1005-amino-acid chain; its full sequence is DNA polymerase (1005 aa).

It belongs to the DNA polymerase type-B family. In terms of assembly, interacts with OPG148. Component of the Uracil-DNA glycosylase(UDG)-OPG148-polymerase complex; OPG148 and OPG116/UDG form a heterodimeric processivity factor that associates with OPG071 to form the processive polymerase holoenzyme.

The enzyme catalyses DNA(n) + a 2'-deoxyribonucleoside 5'-triphosphate = DNA(n+1) + diphosphate. Functionally, catalyzes DNA synthesis. Acquires processivity by associating with a heterodimeric processivity factor comprised of the viral OPG148 and OPG116 proteins, thereby forming the DNA polymerase holoenzyme. Displays 3'- to 5' exonuclease activity. Might participate in viral DNA recombination. Does not perform OPG116/D4synthesis across an abasic site. The protein is DNA polymerase (OPG071) of Variola virus.